The sequence spans 442 residues: Histidinol dehydrogenase (442 aa).

Residues tyrosine 142, glutamine 204, and asparagine 227 each contribute to the NAD(+) site. Positions 250, 272, and 275 each coordinate substrate. The Zn(2+) site is built by glutamine 272 and histidine 275. Residues glutamate 340 and histidine 341 each act as proton acceptor in the active site. 4 residues coordinate substrate: histidine 341, aspartate 374, glutamate 428, and histidine 433. Aspartate 374 lines the Zn(2+) pocket. Zn(2+) is bound at residue histidine 433.

This sequence belongs to the histidinol dehydrogenase family. It depends on Zn(2+) as a cofactor.

The catalysed reaction is L-histidinol + 2 NAD(+) + H2O = L-histidine + 2 NADH + 3 H(+). The protein operates within amino-acid biosynthesis; L-histidine biosynthesis; L-histidine from 5-phospho-alpha-D-ribose 1-diphosphate: step 9/9. In terms of biological role, catalyzes the sequential NAD-dependent oxidations of L-histidinol to L-histidinaldehyde and then to L-histidine. The protein is Histidinol dehydrogenase of Prochlorococcus marinus (strain MIT 9313).